Here is a 446-residue protein sequence, read N- to C-terminus: D(1A) dopamine receptor (446 aa).

Residues 1–22 lie on the Extracellular side of the membrane; the sequence is MPLNDTTMDRRGLVVERDFSFR. N4 is a glycosylation site (N-linked (GlcNAc...) asparagine). Residues 23 to 48 form a helical membrane-spanning segment; that stretch reads ILTACFLSLLILSTLLGNTLVCAAVI. Topologically, residues 49 to 59 are cytoplasmic; that stretch reads RFRHLRSKVTN. Residues 60–86 traverse the membrane as a helical segment; sequence FFVISLAVSDLLVAVLVMPWKAVAEIA. Topologically, residues 87-95 are extracellular; that stretch reads GFWPFGSFC. A disulfide bond links C95 and C185. The helical transmembrane segment at 96–118 threads the bilayer; that stretch reads NIWVAFDIMCSTASILNLCVISV. Residues 119 to 137 lie on the Cytoplasmic side of the membrane; the sequence is DRYWAISSPFRYERKMTPK. Residues 138 to 162 form a helical membrane-spanning segment; the sequence is AAFILISVAWTLSVLISFIPVQLNW. Topologically, residues 163 to 191 are extracellular; it reads HKARPLSSPDGNVSSQDETMDNCDSSLSR. The helical transmembrane segment at 192 to 217 threads the bilayer; it reads TYAISSSLISFYIPVAIMIVTYTRIY. Residues 218–271 are Cytoplasmic-facing; that stretch reads RIAQKQIRRISALERAAVHAKNCQNTTGNGANVECSQPESSFKMSFKRETKVLK. Residues 272-298 form a helical membrane-spanning segment; that stretch reads TLSVIMGVFVCCWLPFFILNCMVPFCE. Residues 299-315 lie on the Extracellular side of the membrane; the sequence is SDLPSGETKPFCIDSIT. Residues 316 to 340 traverse the membrane as a helical segment; that stretch reads FDVFVWFGWANSSLNPIIYAFNADF. At 341–446 the chain is on the cytoplasmic side; it reads RKAFSTLLGC…PITQNGQHKT (106 aa). S-palmitoyl cysteine attachment occurs at residues C350 and C354.

Belongs to the G-protein coupled receptor 1 family. In terms of assembly, interacts with DNAJC14 via its C-terminus.

The protein localises to the cell membrane. It localises to the endoplasmic reticulum membrane. It is found in the cell projection. The protein resides in the cilium membrane. Its subcellular location is the dendrite. The protein localises to the dendritic spine. Functionally, this is one of the five types (D1 to D5) of receptors for dopamine. The activity of this receptor is mediated by G proteins which activate adenylyl cyclase. This chain is D(1A) dopamine receptor (DRD1), found in Didelphis virginiana (North American opossum).